The primary structure comprises 553 residues: MSDIALTVSILALVAVVGLFIGNVKFRGIGLGIGGVLFGGIIVGHFVSQAGMTLSSDMLHVIQEFGLILFVYTIGIQVGPGFFASLRVSGLRLNLFAVLIVIIGGLVTAILHKLFDIPLPVVLGIFSGAVTNTPALGAGQQILRDLGTPMEMVDQMGMSYAMAYPFGICGILFTMWMLRVIFRVNVETEAQQHESSRTNGGALIKTINIRVENLNLHDLAIKDVPILNGDKIICSRLKREETLKVPSPDTIIQLGDLLHLVGQPADLHNAQLVIGQEVDTSLSTKGTDLRVERVVVTNENVLGKRIRDLHFKERYDVVISRLNRAGVELVASGDISLQFGDILNLVGRPSAIDAVANVLGNAQQKLQQVQMLPVFIGIGLGVLLGSIPVFVPRFPAALKLGLAGGPLIMALILGRIGSIGKLYWFMPPSANLALRELGIVLFLSVVGLKSGGDFVNTLVNGEGLSWIGYGALITAVPLITVGILARILAKMNYLTMCGMLAGSMTDPPALAFANNLHPTSGAAALSYATVYPLVMFLRIITPQLLAVLFWSIG.

A run of 5 helical transmembrane segments spans residues 4–24, 28–48, 65–85, 95–115, and 158–178; these read IALT…IGNV, GIGL…HFVS, FGLI…FFAS, LFAV…HKLF, and MSYA…MWML. 2 consecutive RCK C-terminal domains span residues 191–276 and 279–361; these read QQHE…VIGQ and DTSL…VLGN. 5 helical membrane-spanning segments follow: residues 371–391, 394–414, 439–459, 464–484, and 533–553; these read MLPV…PVFV, FPAA…LILG, IVLF…NTLV, LSWI…VGIL, and LVMF…WSIG.

It belongs to the AAE transporter (TC 2.A.81) family. YidE subfamily.

It is found in the cell membrane. The protein is Putative transport protein YidE of Shigella dysenteriae serotype 1 (strain Sd197).